We begin with the raw amino-acid sequence, 194 residues long: ATP-dependent Clp protease proteolytic subunit (194 aa).

Ser99 (nucleophile) is an active-site residue. The active site involves His124.

This sequence belongs to the peptidase S14 family. Fourteen ClpP subunits assemble into 2 heptameric rings which stack back to back to give a disk-like structure with a central cavity, resembling the structure of eukaryotic proteasomes.

It localises to the cytoplasm. The catalysed reaction is Hydrolysis of proteins to small peptides in the presence of ATP and magnesium. alpha-casein is the usual test substrate. In the absence of ATP, only oligopeptides shorter than five residues are hydrolyzed (such as succinyl-Leu-Tyr-|-NHMec, and Leu-Tyr-Leu-|-Tyr-Trp, in which cleavage of the -Tyr-|-Leu- and -Tyr-|-Trp bonds also occurs).. Cleaves peptides in various proteins in a process that requires ATP hydrolysis. Has a chymotrypsin-like activity. Plays a major role in the degradation of misfolded proteins. This Clostridium perfringens (strain ATCC 13124 / DSM 756 / JCM 1290 / NCIMB 6125 / NCTC 8237 / Type A) protein is ATP-dependent Clp protease proteolytic subunit.